The following is a 441-amino-acid chain: MSSTMLDDVDNNMMGIKSISLYELLSDVVKQGDKTRLVTAGPEQVLPDLIRHITETIPFDLFINLKNEMNDARNLVTRLNWLGKFLNDNFLQNHTFPFTILRICELCYDPFKYYKINELEKFVNALEKCCMVTSSWQVFDKTHGEKQEDDKEKDINFIKNQEDVSLMKIPWMTENNTRELAPFIREIDSIMSVNLGYDDEDEEEGFFDGDEDREMGNKSKRNVLLKDENFMVEEYYEDDCGINDDNSDNKGQNCQSDVTKNNSDDEDDDDNDDDYREDGADEDDEDDDHMGSTDDDEDDDEDRQAGESTKVQNFDKKNETPRKRKPTDLDNFEYDESPSFTNMDLTTPKKYKHTATGRFSIIESPSSSLLNAMDGSNEISSSQEEEKEDAHENHEGRSEGLLPGDELVSPSMSSSQEDKMVAIAGITYRENISSPLGKKSR.

Residues D201 to R213 show a composition bias toward acidic residues. Disordered regions lie at residues D201–K220, I242–P348, and S364–D418. Residues N249–N261 show a composition bias toward polar residues. Positions D264–D302 are enriched in acidic residues. At T347 the chain carries Phosphothreonine. Residues E388–S398 are compositionally biased toward basic and acidic residues.

The protein belongs to the PPP4R2 family. Regulatory subunit (R2) of the histone H2A phosphatase complex (HTP-C) consisting of PPH3, PSY2 and PSY4. Interacts with SPT4 and SPT5.

The protein localises to the nucleus. Functionally, regulatory subunit of the histone H2A phosphatase complex, which dephosphorylates H2AS128ph (gamma-H2A) that has been displaced from sites of DNA lesions in the double-stranded DNA break repair process. Dephosphorylation is necessary for efficient recovery from the DNA damage checkpoint. This is Serine/threonine-protein phosphatase 4 regulatory subunit 2 (PSY4) from Saccharomyces cerevisiae (strain ATCC 204508 / S288c) (Baker's yeast).